A 384-amino-acid polypeptide reads, in one-letter code: Beta-ureidopropionase (384 aa).

The region spanning 72–344 (VHVGLVQNRI…DGLLVAKLDL (273 aa)) is the CN hydrolase domain. Glu119 serves as the catalytic Proton acceptor. Lys196 serves as the catalytic Proton donor. Cys233 serves as the catalytic Nucleophile. Ser378 bears the Phosphoserine mark.

It belongs to the carbon-nitrogen hydrolase superfamily. BUP family. As to quaternary structure, homodimer, homotetramer, homooctamer; can also form higher homooligomers.

The protein localises to the cytoplasm. It catalyses the reaction 3-(carbamoylamino)propanoate + H2O + 2 H(+) = beta-alanine + NH4(+) + CO2. It carries out the reaction 3-(carbamoylamino)-2-methylpropanoate + H2O + 2 H(+) = (R)-3-amino-2-methylpropanoate + NH4(+) + CO2. Its pathway is amino-acid biosynthesis; beta-alanine biosynthesis. In terms of biological role, catalyzes a late step in pyrimidine degradation. Converts N-carbamoyl-beta-alanine (3-ureidopropanoate) into beta-alanine, ammonia and carbon dioxide. Likewise, converts N-carbamoyl-beta-aminoisobutyrate (3-ureidoisobutyrate) into beta-aminoisobutyrate, ammonia and carbon dioxide. This Pongo abelii (Sumatran orangutan) protein is Beta-ureidopropionase (UPB1).